An 89-amino-acid polypeptide reads, in one-letter code: Small ribosomal subunit protein uS15 (89 aa).

This sequence belongs to the universal ribosomal protein uS15 family. Part of the 30S ribosomal subunit. Forms a bridge to the 50S subunit in the 70S ribosome, contacting the 23S rRNA.

Functionally, one of the primary rRNA binding proteins, it binds directly to 16S rRNA where it helps nucleate assembly of the platform of the 30S subunit by binding and bridging several RNA helices of the 16S rRNA. Forms an intersubunit bridge (bridge B4) with the 23S rRNA of the 50S subunit in the ribosome. This Desulforudis audaxviator (strain MP104C) protein is Small ribosomal subunit protein uS15.